Reading from the N-terminus, the 427-residue chain is 3-phosphoshikimate 1-carboxyvinyltransferase (427 aa).

3-phosphoshikimate is bound by residues Lys20, Ser21, and Arg25. Lys20 is a binding site for phosphoenolpyruvate. 2 residues coordinate phosphoenolpyruvate: Gly92 and Arg120. 3-phosphoshikimate-binding residues include Ser166, Gln168, Asp312, and Lys339. A phosphoenolpyruvate-binding site is contributed by Gln168. Asp312 serves as the catalytic Proton acceptor. Positions 343 and 385 each coordinate phosphoenolpyruvate.

The protein belongs to the EPSP synthase family. Monomer.

The protein resides in the cytoplasm. The catalysed reaction is 3-phosphoshikimate + phosphoenolpyruvate = 5-O-(1-carboxyvinyl)-3-phosphoshikimate + phosphate. The protein operates within metabolic intermediate biosynthesis; chorismate biosynthesis; chorismate from D-erythrose 4-phosphate and phosphoenolpyruvate: step 6/7. In terms of biological role, catalyzes the transfer of the enolpyruvyl moiety of phosphoenolpyruvate (PEP) to the 5-hydroxyl of shikimate-3-phosphate (S3P) to produce enolpyruvyl shikimate-3-phosphate and inorganic phosphate. This chain is 3-phosphoshikimate 1-carboxyvinyltransferase, found in Streptococcus equi subsp. equi (strain 4047).